The sequence spans 288 residues: GDSL esterase/lipase At3g43550 (288 aa).

Positions 1–19 (MKLQIIWLALVLIAVETYA) are cleaved as a signal peptide. Asparagine 25 carries N-linked (GlcNAc...) asparagine glycosylation. Residue serine 37 is the Nucleophile of the active site.

It belongs to the 'GDSL' lipolytic enzyme family.

The protein localises to the secreted. This is GDSL esterase/lipase At3g43550 from Arabidopsis thaliana (Mouse-ear cress).